The primary structure comprises 1201 residues: ATPase with bromodomain protein abo2 (1201 aa).

Disordered stretches follow at residues 1-223 and 305-324; these read MRRR…MRGP and CDSDETSELSSTSSEQTSDV. A compositionally biased stretch (acidic residues) spans 13-24; the sequence is DDNEDNEEDDDY. A compositionally biased stretch (basic and acidic residues) spans 29–38; the sequence is HSEKSEDHSN. Over residues 66–89 the composition is skewed to polar residues; the sequence is FSSLQKHLNTETPSFSVSIENPSK. A compositionally biased stretch (acidic residues) spans 129-146; that stretch reads TDNNEDESTTFKDEEDDL. The span at 212 to 221 shows a compositional bias: basic residues; it reads RRGRRKRKMR. Residues 312–323 are compositionally biased toward low complexity; sequence ELSSTSSEQTSD. An ATP-binding site is contributed by 413–420; that stretch reads GPPGTGKT. A Bromo domain is found at 897 to 1026; it reads KIKNKIQVKL…AHAELNVDEL (130 aa).

Belongs to the AAA ATPase family.

The protein resides in the nucleus. It catalyses the reaction ATP + H2O = ADP + phosphate + H(+). Its function is as follows. Probable ATPase which may play a role in nucleosome organization. This chain is ATPase with bromodomain protein abo2, found in Schizosaccharomyces pombe (strain 972 / ATCC 24843) (Fission yeast).